Reading from the N-terminus, the 359-residue chain is HTH-type transcriptional regulator Rv3575c (359 aa).

One can recognise an HTH lacI-type domain in the interval 9–64 (ATLASLAAELKVSRTTVSNAFNRPDQLSADLRERVLATAKRLGYAGPDPVARSLRT). Residues 11 to 30 (LASLAAELKVSRTTVSNAFN) constitute a DNA-binding region (H-T-H motif).

In terms of biological role, transcriptional regulator that negatively regulates transcription of the mce4 operon, which is involved in cholesterol transport and utilization. Acts by binding to the promoter region of the mce4 operon. It affects the utilization of host cholesterol as a carbon source, impacting the host's innate immune response. The polypeptide is HTH-type transcriptional regulator Rv3575c (Mycobacterium tuberculosis (strain ATCC 25618 / H37Rv)).